A 484-amino-acid polypeptide reads, in one-letter code: MITTNAKKMMNHIDGEWVNSLGAESEEVVNPANGNVIAYAPLSVRADVDRAVQAAKHAYQTWSLVPVPNRARLLYKYLQLLQEQKEQLADIITTENGKTLKDARGEVQRGIEVVELATATPTLMMGESLPAIAGGIDGSIWRYPLGVVAGITPFNFPMMVPLWMFPLAIACGNTFVLKPSERTPILAGKLVELFYEAGFPKGVLNLVHGGKDVVNGILENDDIKAVSFVGSEPVAKYVYQTGTANGKRVQALAGAKNHAIVMPDCHLEKTVQGIIGAAFGSSGERCMACSVAAVVDDIADDFMEMLVSETRKLKTGDGRSEDHFVGPLIREVHKQRVLDYIDSGIKEGAALAVDGRNPDVREGYFVGATIFDHVTPEMKIWQDEIFAPVLSVVRVQDLDEGIELANQSKFANGAVIYTSSGKSAQQFRDKIDAGMIGVNVNVPAPMAFFSFAGNKASFYGDLGTNGKDGVQFYTRKKVVTERWF.

5 residues coordinate NAD(+): phenylalanine 154, lysine 178, glutamate 181, arginine 182, and serine 231. The active-site Nucleophile is cysteine 286. Residue glutamate 384 coordinates NAD(+).

This sequence belongs to the aldehyde dehydrogenase family. IolA subfamily. Homotetramer.

It carries out the reaction 3-oxopropanoate + NAD(+) + CoA + H2O = hydrogencarbonate + acetyl-CoA + NADH + H(+). It catalyses the reaction 2-methyl-3-oxopropanoate + NAD(+) + CoA + H2O = propanoyl-CoA + hydrogencarbonate + NADH + H(+). The protein operates within polyol metabolism; myo-inositol degradation into acetyl-CoA; acetyl-CoA from myo-inositol: step 7/7. In terms of biological role, catalyzes the oxidation of malonate semialdehyde (MSA) and methylmalonate semialdehyde (MMSA) into acetyl-CoA and propanoyl-CoA, respectively. Is involved in a myo-inositol catabolic pathway. Bicarbonate, and not CO2, is the end-product of the enzymatic reaction. The sequence is that of Malonate-semialdehyde dehydrogenase 1 from Bacillus licheniformis (strain ATCC 14580 / DSM 13 / JCM 2505 / CCUG 7422 / NBRC 12200 / NCIMB 9375 / NCTC 10341 / NRRL NRS-1264 / Gibson 46).